Consider the following 449-residue polypeptide: Cytochrome P450 monooxygenase iliC (449 aa).

A helical transmembrane segment spans residues threonine 28–glycine 44. Cysteine 397 is a heme binding site.

Belongs to the cytochrome P450 family. It depends on heme as a cofactor.

The protein localises to the membrane. It catalyses the reaction (3E,5S)-3-[(2E,4E,8S,10E,12Z)-1-hydroxy-4,8-dimethyltetradeca-2,4,10,12-tetraen-1-ylidene]-5-[(4-hydroxyphenyl)methyl]pyrrolidine-2,4-dione + reduced [NADPH--hemoprotein reductase] + O2 = 3-[(2E,4E,8S,10E,12Z)-4,8-dimethyltetradeca-2,4,10,12-tetraenoyl]-4-hydroxy-5-(4-hydroxyphenyl)-1,2-dihydropyridin-2-one + oxidized [NADPH--hemoprotein reductase] + 2 H2O. Its pathway is mycotoxin biosynthesis. Cytochrome P450 monooxygenase; part of the gene cluster that mediates the biosynthesis of ilicicolin H, a 4-hydroxy-2-pyridonealkaloid that has potent and broad antifungal activities by inhibiting the mitochondrial respiration chain. IliC catalyzes the ring expansion of the tetramate intermediate to the acyclic 2-pyridone intermediate that contains the trans bis-diene chain. The biosynthesis of ilicicolin H starts with formation of the tetramic acid by the hybrid PKS-NRPS synthetase iliA with the partnering trans-enoyl reductase iliB since iliA lacks a designated enoylreductase (ER) domain. The cytochrome P450 monooxygenase iliC then catalyzes the ring expansion of the tetramate to the acyclic 2-pyridone. The pericyclase iliD further converts the acyclic 2-pyridone into 8-epi-ilicicolin H. 8-epi-ilicicolin H might then spontaneously convert to ilicicolin H since ilicicolin H is produced in the absence of the epimerase iliE, in contrast to what was observed for the Talaromyces variabilis ilicolin H biosynthetic pathway. This chain is Cytochrome P450 monooxygenase iliC, found in Hypocrea jecorina (strain QM6a) (Trichoderma reesei).